The chain runs to 297 residues: Rhomboid-type serine protease 2 (297 aa).

A run of 6 helical transmembrane segments spans residues 14–34 (IQHP…IFLL), 60–80 (ISFY…LVAL), 98–118 (IVLN…SIGF), 120–140 (PDEA…YWAI), 155–175 (LVVP…IVIP), and 179–199 (FIGH…YLDV). The active-site Nucleophile is Ser128. His182 is a catalytic residue. A disordered region spans residues 268 to 297 (DLEAGTRSRGNSSVDPTTSFPGTGQTLGTQ). Positions 275–297 (SRGNSSVDPTTSFPGTGQTLGTQ) are enriched in polar residues.

Belongs to the peptidase S54 family.

It is found in the golgi apparatus membrane. It localises to the golgi apparatus. Its subcellular location is the cis-Golgi network membrane. The catalysed reaction is Cleaves type-1 transmembrane domains using a catalytic dyad composed of serine and histidine that are contributed by different transmembrane domains.. Functionally, probable rhomboid-type serine protease that catalyzes intramembrane proteolysis. The chain is Rhomboid-type serine protease 2 (RBD2) from Yarrowia lipolytica (strain CLIB 122 / E 150) (Yeast).